The sequence spans 93 residues: Consomatin G2 (93 aa).

The first 18 residues, 1 to 18 (MQTAYWVMLMMMVCITAP), serve as a signal peptide directing secretion. Positions 19–69 (LPEGGKPNSGIRGLVPNDLTPQHTLRSLISRRQTDVLLDATLLTTPAPEQR) are excised as a propeptide. A disulfide bridge connects residues Cys72 and Cys77. Position 74 is a D-tryptophan (Trp74). Residues 79–93 (WRPYPWRRRDLNGKR) constitute a propeptide that is removed on maturation.

Belongs to the conotoxin C superfamily. Consomatin family. As to expression, expressed by the venom duct.

It is found in the secreted. Moderately activates human somatostatin receptors (SSTR) with a preferential activation of SSTR1 and SSTR4. In vivo, does not cause behavioral changes in mice within a few minutes of intracranial injection, but causes a progressive loss of movement thereafter. Four to five hours after injection, mice recover, even with the highest dose tested. Shows antinociception and antihyperalgesia activities in two mouse models of acute pain, most probably by acting outside the central nervous system. The protein is Consomatin G2 of Conus geographus (Geography cone).